Here is a 304-residue protein sequence, read N- to C-terminus: MYYGFDMGGTKIELGVFDAELNKVWQKRVLTPRTHYDELLTTLVDLVHEADAQVGVQGKVGIGIPGIQTGDNDALFTANLPAAMGKPLRTDLSQRLQRDVRINNDANCFVLSEAWDAEFRSYPVVLGLILGTGLGGGLVINGRPVDGRNGIAGEFGHLRLPSDALDIIGVDIPRVKCGCGQSGCIENYISGRGFEWLYEHMYGEALPAVTIIRHYRGGEEKAREFVDRFMDLLAACLGNLLTLFDPHLLVLGGGLSNFDEIYQILPTRLPSRLLPIAKLPRIEKARHGDAGGVRGAALLHLMDN.

ATP is bound by residues 4-11 (GFDMGGTK) and 133-140 (GLGGGLVI). Zn(2+) is bound by residues His-157, Cys-177, Cys-179, and Cys-184.

It belongs to the ROK (NagC/XylR) family. NagK subfamily.

It catalyses the reaction N-acetyl-D-glucosamine + ATP = N-acetyl-D-glucosamine 6-phosphate + ADP + H(+). It functions in the pathway cell wall biogenesis; peptidoglycan recycling. Functionally, catalyzes the phosphorylation of N-acetyl-D-glucosamine (GlcNAc) derived from cell-wall degradation, yielding GlcNAc-6-P. This chain is N-acetyl-D-glucosamine kinase, found in Pectobacterium carotovorum subsp. carotovorum (strain PC1).